The following is a 261-amino-acid chain: Probable RNA-binding protein ARP1 (261 aa).

The RRM domain occupies 17-94; sequence TKVFVGGLAW…RRANCNLASL (78 aa). Residues 96-122 are disordered; that stretch reads GRLRKSPTMTSPQQGPKNGNRATPPHV. Residues 102-116 are compositionally biased toward polar residues; that stretch reads PTMTSPQQGPKNGNR.

As to expression, expressed in vasculature of leaves, roots and siliques.

The protein localises to the nucleus. Probable RNA-binding protein involved in the regulation of abscisic acid (ABA) response during seed germination. May regulate transcript levels of several germination-responsive genes under ABA. In Arabidopsis thaliana (Mouse-ear cress), this protein is Probable RNA-binding protein ARP1.